We begin with the raw amino-acid sequence, 192 residues long: Peptidyl-tRNA hydrolase (192 aa).

Tyr-14 contacts tRNA. His-19 (proton acceptor) is an active-site residue. TRNA contacts are provided by Tyr-64, Asn-66, and Asn-112.

The protein belongs to the PTH family. Monomer.

The protein resides in the cytoplasm. It catalyses the reaction an N-acyl-L-alpha-aminoacyl-tRNA + H2O = an N-acyl-L-amino acid + a tRNA + H(+). Hydrolyzes ribosome-free peptidyl-tRNAs (with 1 or more amino acids incorporated), which drop off the ribosome during protein synthesis, or as a result of ribosome stalling. Its function is as follows. Catalyzes the release of premature peptidyl moieties from peptidyl-tRNA molecules trapped in stalled 50S ribosomal subunits, and thus maintains levels of free tRNAs and 50S ribosomes. This Anaeromyxobacter dehalogenans (strain 2CP-1 / ATCC BAA-258) protein is Peptidyl-tRNA hydrolase.